Reading from the N-terminus, the 418-residue chain is Light-independent protochlorophyllide reductase subunit N (418 aa).

[4Fe-4S] cluster is bound by residues Cys17, Cys42, and Cys103.

This sequence belongs to the BchN/ChlN family. As to quaternary structure, protochlorophyllide reductase is composed of three subunits; ChlL, ChlN and ChlB. Forms a heterotetramer of two ChlB and two ChlN subunits. [4Fe-4S] cluster serves as cofactor.

It carries out the reaction chlorophyllide a + oxidized 2[4Fe-4S]-[ferredoxin] + 2 ADP + 2 phosphate = protochlorophyllide a + reduced 2[4Fe-4S]-[ferredoxin] + 2 ATP + 2 H2O. It functions in the pathway porphyrin-containing compound metabolism; chlorophyll biosynthesis (light-independent). Functionally, component of the dark-operative protochlorophyllide reductase (DPOR) that uses Mg-ATP and reduced ferredoxin to reduce ring D of protochlorophyllide (Pchlide) to form chlorophyllide a (Chlide). This reaction is light-independent. The NB-protein (ChlN-ChlB) is the catalytic component of the complex. This Prochlorococcus marinus (strain NATL2A) protein is Light-independent protochlorophyllide reductase subunit N.